The chain runs to 148 residues: Protein PLANT CADMIUM RESISTANCE 9 (148 aa).

The chain crosses the membrane as a helical span at residues 59-78 (LAGLMVVAMSSIGCGWYYAS).

Belongs to the cornifelin family.

The protein resides in the membrane. Its function is as follows. May be involved in cadmium resistance. This Arabidopsis thaliana (Mouse-ear cress) protein is Protein PLANT CADMIUM RESISTANCE 9 (PCR9).